The chain runs to 366 residues: Ribosomal RNA large subunit methyltransferase M (366 aa).

S-adenosyl-L-methionine contacts are provided by residues Ser-188, 221-224, Asp-240, Asp-260, and Asp-277; that span reads CPGG. Catalysis depends on Lys-306, which acts as the Proton acceptor.

This sequence belongs to the class I-like SAM-binding methyltransferase superfamily. RNA methyltransferase RlmE family. RlmM subfamily. As to quaternary structure, monomer.

The protein localises to the cytoplasm. It catalyses the reaction cytidine(2498) in 23S rRNA + S-adenosyl-L-methionine = 2'-O-methylcytidine(2498) in 23S rRNA + S-adenosyl-L-homocysteine + H(+). Functionally, catalyzes the 2'-O-methylation at nucleotide C2498 in 23S rRNA. The chain is Ribosomal RNA large subunit methyltransferase M from Salmonella agona (strain SL483).